Reading from the N-terminus, the 341-residue chain is 4-hydroxy-2-oxovalerate aldolase (341 aa).

The Pyruvate carboxyltransferase domain maps to 9–260; sequence VVITDSTLRD…ATGIDLYRVL (252 aa). 17 to 18 contacts substrate; the sequence is RD. Aspartate 18 is a Mn(2+) binding site. Residue histidine 21 is the Proton acceptor of the active site. The substrate site is built by serine 172 and histidine 199. Positions 199 and 201 each coordinate Mn(2+).

It belongs to the 4-hydroxy-2-oxovalerate aldolase family.

It catalyses the reaction (S)-4-hydroxy-2-oxopentanoate = acetaldehyde + pyruvate. This chain is 4-hydroxy-2-oxovalerate aldolase, found in Spirochaeta aurantia.